Here is a 250-residue protein sequence, read N- to C-terminus: Cell division protein ZapD (250 aa).

It belongs to the ZapD family. As to quaternary structure, interacts with FtsZ.

The protein localises to the cytoplasm. Functionally, cell division factor that enhances FtsZ-ring assembly. Directly interacts with FtsZ and promotes bundling of FtsZ protofilaments, with a reduction in FtsZ GTPase activity. This is Cell division protein ZapD from Pectobacterium atrosepticum (strain SCRI 1043 / ATCC BAA-672) (Erwinia carotovora subsp. atroseptica).